A 448-amino-acid chain; its full sequence is Tubulin beta chain (448 aa).

Gln-11, Glu-69, Ser-138, Gly-142, Thr-143, Gly-144, Asn-204, and Asn-226 together coordinate GTP. Glu-69 provides a ligand contact to Mg(2+). The disordered stretch occupies residues 429–448; sequence GIDEGDEDYEIEEEKEPLEY.

Belongs to the tubulin family. Dimer of alpha and beta chains. A typical microtubule is a hollow water-filled tube with an outer diameter of 25 nm and an inner diameter of 15 nM. Alpha-beta heterodimers associate head-to-tail to form protofilaments running lengthwise along the microtubule wall with the beta-tubulin subunit facing the microtubule plus end conferring a structural polarity. Microtubules usually have 13 protofilaments but different protofilament numbers can be found in some organisms and specialized cells. It depends on Mg(2+) as a cofactor.

It localises to the cytoplasm. Its subcellular location is the cytoskeleton. Functionally, tubulin is the major constituent of microtubules, a cylinder consisting of laterally associated linear protofilaments composed of alpha- and beta-tubulin heterodimers. Microtubules grow by the addition of GTP-tubulin dimers to the microtubule end, where a stabilizing cap forms. Below the cap, tubulin dimers are in GDP-bound state, owing to GTPase activity of alpha-tubulin. The polypeptide is Tubulin beta chain (nda3) (Schizosaccharomyces pombe (strain 972 / ATCC 24843) (Fission yeast)).